A 72-amino-acid polypeptide reads, in one-letter code: Putative snRNP Sm-like protein (72 aa).

Residues 4 to 72 (RPLDILNNAL…RGDNVVYVSP (69 aa)) enclose the Sm domain.

Belongs to the snRNP Sm proteins family.

This is Putative snRNP Sm-like protein from Methanosarcina acetivorans (strain ATCC 35395 / DSM 2834 / JCM 12185 / C2A).